The chain runs to 109 residues: Nucleoid-associated protein NT01EI_1109 (109 aa).

The interval 89–109 is disordered; the sequence is KERMASVSSGMQLPPGFKMPF.

Belongs to the YbaB/EbfC family. In terms of assembly, homodimer.

Its subcellular location is the cytoplasm. It is found in the nucleoid. In terms of biological role, binds to DNA and alters its conformation. May be involved in regulation of gene expression, nucleoid organization and DNA protection. This Edwardsiella ictaluri (strain 93-146) protein is Nucleoid-associated protein NT01EI_1109.